The following is a 162-amino-acid chain: UPF0305 protein MmarC6_0221 (162 aa).

The protein belongs to the UPF0305 family.

This is UPF0305 protein MmarC6_0221 from Methanococcus maripaludis (strain C6 / ATCC BAA-1332).